A 108-amino-acid chain; its full sequence is Ig kappa chain V-V region HP 124E1 (108 aa).

Residues 1–23 (DIQMTQTTSSLSASLGDRVTISC) form a framework-1 region. Cys-23 and Cys-88 are oxidised to a cystine. The interval 24–34 (RASQDINNYLN) is complementarity-determining-1. The tract at residues 35-49 (WYQQKPDGTVKLLIY) is framework-2. The complementarity-determining-2 stretch occupies residues 50-56 (YTSRLHS). Residues 57 to 88 (GVPSRFSGSGSGTDYSLTISNLEQEDIATYFC) are framework-3. The tract at residues 89–97 (QQGKTLPRT) is complementarity-determining-3. Positions 98 to 108 (FGGGTKLEIKR) are framework-4.

The chain is Ig kappa chain V-V region HP 124E1 from Mus musculus (Mouse).